A 651-amino-acid chain; its full sequence is Tudor domain-containing protein 3 (651 aa).

Residues 193-233 (LVDEKALKHITEMGFSKEASRQALMDNGNNLEAALNVLLTS) enclose the UBA domain. 3 disordered regions span residues 234–271 (NKQK…SAPS), 287–369 (EEPK…VSEV), and 381–450 (YSRY…TSIP). At Ser256 the chain carries Phosphoserine. The segment covering 291–312 (SQPQQLHQGQYRSSNTEQNGVK) has biased composition (polar residues). Over residues 313-338 (DNNHLRHPPRNDTRQPRNEKPPRFQR) the composition is skewed to basic and acidic residues. Ser345 is subject to Phosphoserine. A Glycyl lysine isopeptide (Lys-Gly) (interchain with G-Cter in SUMO2) cross-link involves residue Lys470. One can recognise a Tudor domain in the interval 555–615 (MWKPGDECFA…KPIQTEAWEE (61 aa)). Basic and acidic residues predominate over residues 624–633 (EFRRGGDGQP). The segment at 624–651 (EFRRGGDGQPRRSTRPTQQFYQPPRARN) is disordered. The EBM motif; may mediate interaction with the EJC stretch occupies residues 631 to 651 (GQPRRSTRPTQQFYQPPRARN).

As to quaternary structure, component of mRNA stress granules. Interacts with FMR1, FXR1, FXR2, EWSR1, FUS, SERBP1, EEF1A1 and DDX3X or DDX3Y, and with the small nuclear ribonucleoprotein-associated proteins SNRPB and SNRPN. Interacts with 'Lys-48'-linked tetra-ubiquitin, but not with monoubiquitin or 'Lys-63'-linked ubiquitin chains. May interact with the exon junction complex (EJC) composed at least of CASC3, EIF4A3, MAGOH and RBM8A. Interacts with POLR2A (via the C-terminal domain (CTD)). Post-translationally, probably cleaved by enteroviral 2A proteinase. Detected in heart, brain, placenta, lung, liver, skeletal muscle, kidney and pancreas.

The protein resides in the cytoplasm. It is found in the nucleus. Its function is as follows. Scaffolding protein that specifically recognizes and binds dimethylarginine-containing proteins. Plays a role in the regulation of translation of target mRNAs by binding Arg/Gly-rich motifs (GAR) in dimethylarginine-containing proteins. In nucleus, acts as a coactivator: recognizes and binds asymmetric dimethylation on the core histone tails associated with transcriptional activation (H3R17me2a and H4R3me2a) and recruits proteins at these arginine-methylated loci. In cytoplasm, acts as an antiviral factor that participates in the assembly of stress granules together with G3BP1. In Homo sapiens (Human), this protein is Tudor domain-containing protein 3 (TDRD3).